The chain runs to 156 residues: Ribonuclease H (156 aa).

Positions 2-144 constitute an RNase H type-1 domain; that stretch reads SQFDVTVFTD…CDVLARAQAS (143 aa). 4 residues coordinate Mg(2+): Asp-11, Glu-49, Asp-71, and Asp-136.

This sequence belongs to the RNase H family. As to quaternary structure, monomer. Mg(2+) is required as a cofactor.

The protein resides in the cytoplasm. It carries out the reaction Endonucleolytic cleavage to 5'-phosphomonoester.. Functionally, endonuclease that specifically degrades the RNA of RNA-DNA hybrids. The polypeptide is Ribonuclease H (Nitratidesulfovibrio vulgaris (strain ATCC 29579 / DSM 644 / CCUG 34227 / NCIMB 8303 / VKM B-1760 / Hildenborough) (Desulfovibrio vulgaris)).